The following is a 295-amino-acid chain: Elongation factor Ts (295 aa).

Positions 79-82 are involved in Mg(2+) ion dislocation from EF-Tu; sequence TDFV.

It belongs to the EF-Ts family.

It is found in the cytoplasm. In terms of biological role, associates with the EF-Tu.GDP complex and induces the exchange of GDP to GTP. It remains bound to the aminoacyl-tRNA.EF-Tu.GTP complex up to the GTP hydrolysis stage on the ribosome. The polypeptide is Elongation factor Ts (Bacillus cytotoxicus (strain DSM 22905 / CIP 110041 / 391-98 / NVH 391-98)).